The sequence spans 138 residues: Ribosome-binding factor A (138 aa).

The protein belongs to the RbfA family. Monomer. Binds 30S ribosomal subunits, but not 50S ribosomal subunits or 70S ribosomes.

It is found in the cytoplasm. Functionally, one of several proteins that assist in the late maturation steps of the functional core of the 30S ribosomal subunit. Associates with free 30S ribosomal subunits (but not with 30S subunits that are part of 70S ribosomes or polysomes). Required for efficient processing of 16S rRNA. May interact with the 5'-terminal helix region of 16S rRNA. In Sodalis glossinidius (strain morsitans), this protein is Ribosome-binding factor A.